Here is a 469-residue protein sequence, read N- to C-terminus: Neuraminidase (469 aa).

At 1-9 (MNPNQKIIT) the chain is on the intravirion side. A helical transmembrane segment spans residues 10 to 30 (IGSVSLTIATICFLMQIAILV). Residues 11–33 (GSVSLTIATICFLMQIAILVTTV) form an involved in apical transport and lipid raft association region. Residues 31–469 (TTVTLHFKQY…DGADINLMPI (439 aa)) are Virion surface-facing. Residues 36–88 (HFKQYECSSPPNNQVIPCQPTIIERNITEIVYLTNTTIEKEICPKLVEYRNWS) form a hypervariable stalk region region. 3 N-linked (GlcNAc...) asparagine; by host glycosylation sites follow: N61, N70, and N86. The tract at residues 91–469 (QCKITGFAPF…DGADINLMPI (379 aa)) is head of neuraminidase. 8 cysteine pairs are disulfide-bonded: C92/C417, C124/C129, C183/C230, C232/C237, C278/C291, C280/C289, C318/C337, and C421/C447. A substrate-binding site is contributed by R118. A glycan (N-linked (GlcNAc...) asparagine; by host) is linked at N146. Catalysis depends on D151, which acts as the Proton donor/acceptor. Position 152 (R152) interacts with substrate. 2 N-linked (GlcNAc...) asparagine; by host glycosylation sites follow: N200 and N234. Substrate is bound at residue 276–277 (EE). R292 serves as a coordination point for substrate. Positions 293, 297, and 324 each coordinate Ca(2+). A disordered region spans residues 326 to 350 (PRKNDSSSSSYCQNPNNEKGSHGVK). A glycan (N-linked (GlcNAc...) asparagine; by host) is linked at N329. The segment covering 331–343 (SSSSSYCQNPNNE) has biased composition (polar residues). R371 is a binding site for substrate. N-linked (GlcNAc...) asparagine; by host glycosylation is present at N402. Y406 functions as the Nucleophile in the catalytic mechanism.

It belongs to the glycosyl hydrolase 34 family. As to quaternary structure, homotetramer. The cofactor is Ca(2+). N-glycosylated.

Its subcellular location is the virion membrane. It localises to the host apical cell membrane. The enzyme catalyses Hydrolysis of alpha-(2-&gt;3)-, alpha-(2-&gt;6)-, alpha-(2-&gt;8)- glycosidic linkages of terminal sialic acid residues in oligosaccharides, glycoproteins, glycolipids, colominic acid and synthetic substrates.. Its activity is regulated as follows. Inhibited by the neuraminidase inhibitors zanamivir (Relenza) and oseltamivir (Tamiflu). These drugs interfere with the release of progeny virus from infected cells and are effective against all influenza strains. Resistance to neuraminidase inhibitors is quite rare. Its function is as follows. Catalyzes the removal of terminal sialic acid residues from viral and cellular glycoconjugates. Cleaves off the terminal sialic acids on the glycosylated HA during virus budding to facilitate virus release. Additionally helps virus spread through the circulation by further removing sialic acids from the cell surface. These cleavages prevent self-aggregation and ensure the efficient spread of the progeny virus from cell to cell. Otherwise, infection would be limited to one round of replication. Described as a receptor-destroying enzyme because it cleaves a terminal sialic acid from the cellular receptors. May facilitate viral invasion of the upper airways by cleaving the sialic acid moieties on the mucin of the airway epithelial cells. Likely to plays a role in the budding process through its association with lipid rafts during intracellular transport. May additionally display a raft-association independent effect on budding. Plays a role in the determination of host range restriction on replication and virulence. Sialidase activity in late endosome/lysosome traffic seems to enhance virus replication. The sequence is that of Neuraminidase from Influenza A virus (strain A/Kitakyushu/159/1993 H3N2).